Here is an 838-residue protein sequence, read N- to C-terminus: Periplasmic nitrate reductase (838 aa).

Residues 1–29 constitute a signal peptide (tat-type signal); the sequence is MDMSRRTLLKAQAAAAAAAVAGIDLPAEA. Positions 40-96 constitute a 4Fe-4S Mo/W bis-MGD-type domain; that stretch reads LKWSKAPCRFCGTGCGVMVGVKDGRVVATHGDMQAEVNRGLNCVKGYFLSKIMYGAD. Residues Cys47, Cys50, Cys54, and Cys82 each contribute to the [4Fe-4S] cluster site. Residues Lys84, Gln151, Asn176, Cys180, 213–220, 244–248, 263–265, Met374, Gln378, Asn484, 510–511, Lys533, Asp560, and 720–729 contribute to the Mo-bis(molybdopterin guanine dinucleotide) site; these read WGSNMAEM, STYEH, GTD, SD, and TGRVLEHWHS. Substrate is bound at residue Phe796. Residues Asn804 and Lys821 each contribute to the Mo-bis(molybdopterin guanine dinucleotide) site.

It belongs to the prokaryotic molybdopterin-containing oxidoreductase family. NasA/NapA/NarB subfamily. As to quaternary structure, component of the periplasmic nitrate reductase NapAB complex composed of NapA and NapB. [4Fe-4S] cluster is required as a cofactor. It depends on Mo-bis(molybdopterin guanine dinucleotide) as a cofactor. In terms of processing, predicted to be exported by the Tat system. The position of the signal peptide cleavage has not been experimentally proven.

It localises to the periplasm. It catalyses the reaction 2 Fe(II)-[cytochrome] + nitrate + 2 H(+) = 2 Fe(III)-[cytochrome] + nitrite + H2O. In terms of biological role, catalytic subunit of the periplasmic nitrate reductase complex NapAB. Receives electrons from NapB and catalyzes the reduction of nitrate to nitrite. In Methylobacterium sp. (strain 4-46), this protein is Periplasmic nitrate reductase.